Consider the following 353-residue polypeptide: MGTPNPRTWSELPPDLLGSIFHRLSFTDFHRAKIVCWNWNLSSKLTVPKKIRSPWLMLFPEGDNEDGSVLLFNPEEEEKIYKTKRYFSGIRFLANSGKWFLLIDSLFNLYIIDVFSENKIDLLPLEESLLDKEESEDLTGLLWVDEKTAEYVVVLFFNFPSGNVGFCKKGDDHYTKIPLHCGVPWRLQGLIDAVLLGYRLYIRTELSYIRILDLSTQQGFEDVNKYEPFQVFSSTQDCSIAVTTRGEVLLVKSILDNTTIGSHRRFCIFKNIDYNPQEEVDSLGDEALLLNLGILLPSIAPNSIYFTRHGRIYHKEHFNLDLCVFNLETKTLKRFPSLANMKLKDAQWFFPGI.

One can recognise an F-box domain in the interval proline 6–leucine 58.

The protein is F-box protein At2g14290 of Arabidopsis thaliana (Mouse-ear cress).